A 160-amino-acid chain; its full sequence is Nucleotide-binding protein VFMJ11_1323 (160 aa).

This sequence belongs to the YajQ family.

In terms of biological role, nucleotide-binding protein. In Aliivibrio fischeri (strain MJ11) (Vibrio fischeri), this protein is Nucleotide-binding protein VFMJ11_1323.